Consider the following 596-residue polypeptide: Aspartic proteinase MKC7 (596 aa).

Residues 1-22 (MKLSVLTFVVDALLVCSSIVDA) form the signal peptide. The propeptide occupies 23-65 (GVTDFPSLPSNEVYVKMNFQKKYGSSFENALDDTKGRTRLMTR). In terms of domain architecture, Peptidase A1 spans 81–468 (YSVELDIGTP…DLDNMEISMA (388 aa)). Asp-99 is a catalytic residue. N-linked (GlcNAc...) asparagine glycans are attached at residues Asn-180, Asn-190, Asn-219, Asn-229, Asn-232, Asn-286, and Asn-346. Asp-360 is a catalytic residue. 2 N-linked (GlcNAc...) asparagine glycosylation sites follow: Asn-471 and Asn-517. The span at 530-570 (ATSSSSSKGQKTQTSTTALSISKSTSSTSSTGMLSPTSSSS) shows a compositional bias: low complexity. The tract at residues 530-578 (ATSSSSSKGQKTQTSTTALSISKSTSSTSSTGMLSPTSSSSTRKENGGH) is disordered. Asn-575 is lipidated: GPI-anchor amidated asparagine. The propeptide at 576–596 (GGHNLNPPFFARFITAIFHHI) is removed in mature form.

This sequence belongs to the peptidase A1 family.

The protein resides in the cell membrane. The catalysed reaction is Hydrolyzes various precursor proteins with Arg or Lys in P1, and commonly Arg or Lys also in P2. The P3 amino acid is usually non-polar, but otherwise additional basic amino acids are favorable in both non-prime and prime positions.. Cleaves proteins C-terminally to the most C-terminal basic residue. Can process the alpha-mating factor precursor. Required for cell wall integrity. This chain is Aspartic proteinase MKC7 (MKC7), found in Saccharomyces cerevisiae (strain ATCC 204508 / S288c) (Baker's yeast).